Reading from the N-terminus, the 207-residue chain is Glutathione S-transferase 4 (207 aa).

Residues P2–G79 enclose the GST N-terminal domain. Residues Y8, W39, K43, G49–L51, and Q63–S64 each bind glutathione. Residues T81–V207 form the GST C-terminal domain.

The protein belongs to the GST superfamily. Sigma family.

The catalysed reaction is RX + glutathione = an S-substituted glutathione + a halide anion + H(+). Functionally, conjugation of reduced glutathione to a wide number of exogenous and endogenous hydrophobic electrophiles. May play a role in the detoxification of reactive oxygen species produced during pathogenic bacterial infection. The polypeptide is Glutathione S-transferase 4 (Caenorhabditis elegans).